The primary structure comprises 277 residues: Large ribosomal subunit protein uL2 (277 aa).

Residues glycine 222–lysine 258 are disordered.

Belongs to the universal ribosomal protein uL2 family. Part of the 50S ribosomal subunit. Forms a bridge to the 30S subunit in the 70S ribosome.

Its function is as follows. One of the primary rRNA binding proteins. Required for association of the 30S and 50S subunits to form the 70S ribosome, for tRNA binding and peptide bond formation. It has been suggested to have peptidyltransferase activity; this is somewhat controversial. Makes several contacts with the 16S rRNA in the 70S ribosome. This is Large ribosomal subunit protein uL2 from Clostridium perfringens (strain 13 / Type A).